The chain runs to 188 residues: Elongation factor P (188 aa).

This sequence belongs to the elongation factor P family.

Its subcellular location is the cytoplasm. Its pathway is protein biosynthesis; polypeptide chain elongation. Functionally, involved in peptide bond synthesis. Stimulates efficient translation and peptide-bond synthesis on native or reconstituted 70S ribosomes in vitro. Probably functions indirectly by altering the affinity of the ribosome for aminoacyl-tRNA, thus increasing their reactivity as acceptors for peptidyl transferase. The chain is Elongation factor P from Chlorobaculum tepidum (strain ATCC 49652 / DSM 12025 / NBRC 103806 / TLS) (Chlorobium tepidum).